The primary structure comprises 366 residues: C-X-C chemokine receptor type 3 (366 aa).

Topologically, residues 1–55 (MVPEMSERQEFQASEFAYLLENSSYDYGENETYFCCTSPPCPQDFSLNFDRTFLP) are extracellular. Asn22 carries an N-linked (GlcNAc...) asparagine glycan. Residues Tyr25 and Tyr27 each carry the sulfotyrosine modification. Asn30 carries N-linked (GlcNAc...) asparagine glycosylation. The helical transmembrane segment at 56-76 (VLYSLLFVLGLLGNGVVAVVL) threads the bilayer. The Cytoplasmic segment spans residues 77–88 (LSQRAALSSTDT). A helical transmembrane segment spans residues 89–109 (FLLHLAVADALLVLTLPLWAV). Residues 110 to 124 (DAAIQWVFGSGLCKV) lie on the Extracellular side of the membrane. Cys122 and Cys201 are oxidised to a cystine. A helical membrane pass occupies residues 125–145 (AGALFNINFYAGALLLACISF). The Cytoplasmic portion of the chain corresponds to 146–167 (DRYLSIVHATQFYRRGPPARVA). Residues 168 to 188 (LTCVAVWGLCLLFALPDFIFL) traverse the membrane as a helical segment. Topologically, residues 189 to 221 (SSHHDNRLNATHCQYNFPQEGRTALRVLQLVAG) are extracellular. Residue Asn197 is glycosylated (N-linked (GlcNAc...) asparagine). Residues 222–242 (FLLPLLVMAYCYARILTVLLV) form a helical membrane-spanning segment. The Cytoplasmic portion of the chain corresponds to 243 to 254 (SRGQRRLRAMRL). A helical transmembrane segment spans residues 255–275 (VVVVVVAFALCWTPYHLVVLV). The Extracellular segment spans residues 276–299 (DTLMDLGALARNCGRESRVDVAKS). The chain crosses the membrane as a helical span at residues 300-320 (VTSGMGYMHCCLNPLLYAFVG). At 321–366 (VKFRERMWVLLMRLGCPDQRGHQRQPSASRRDSSWSETTEASYSGL) the chain is on the cytoplasmic side. The tract at residues 339-366 (QRGHQRQPSASRRDSSWSETTEASYSGL) is disordered. Over residues 355–366 (WSETTEASYSGL) the composition is skewed to polar residues.

It belongs to the G-protein coupled receptor 1 family. As to quaternary structure, homomer. Forms heteromers with ACKR4. Interacts with PF4/CXCL4. In terms of processing, sulfation on Tyr-25 and Tyr-27 is essential for CXCL10 binding. Post-translationally, N-glycosylated.

The protein resides in the cell membrane. Receptor for the C-X-C chemokine CXCL9, CXCL10 and CXCL11 and mediates the proliferation, survival and angiogenic activity of mesangial cells through a heterotrimeric G-protein signaling pathway. Probably promotes cell chemotaxis response. Binds to CCL21. Upon activation by PF4, induces activated T-lymphocytes migration mediated via downstream Ras/extracellular signal-regulated kinase (ERK) signaling. The polypeptide is C-X-C chemokine receptor type 3 (CXCR3) (Capra hircus (Goat)).